The primary structure comprises 282 residues: 2,3,4,5-tetrahydropyridine-2,6-dicarboxylate N-succinyltransferase (282 aa).

The substrate site is built by R109 and D146.

This sequence belongs to the transferase hexapeptide repeat family. Homotrimer.

The protein localises to the cytoplasm. The catalysed reaction is (S)-2,3,4,5-tetrahydrodipicolinate + succinyl-CoA + H2O = (S)-2-succinylamino-6-oxoheptanedioate + CoA. It functions in the pathway amino-acid biosynthesis; L-lysine biosynthesis via DAP pathway; LL-2,6-diaminopimelate from (S)-tetrahydrodipicolinate (succinylase route): step 1/3. The chain is 2,3,4,5-tetrahydropyridine-2,6-dicarboxylate N-succinyltransferase from Bartonella quintana (strain Toulouse) (Rochalimaea quintana).